The chain runs to 736 residues: RNA-binding protein RMD9-like, mitochondrial (736 aa).

Disordered stretches follow at residues 1-28, 124-148, and 566-618; these read MFRF…KTNS, PRRS…HPNT, and NRGI…GTPV. Residues 1–79 constitute a mitochondrion transit peptide; it reads MFRFAQPANV…HFKNQFSSRN (79 aa). Low complexity predominate over residues 125-140; that stretch reads RRSNMRNNGNNNMNNG. Over residues 566–578 the composition is skewed to polar residues; the sequence is NRGISSSSPMSAV. The span at 579–596 shows a compositional bias: low complexity; that stretch reads NSLAPSTTNTPSPSLSPI. Over residues 602-613 the composition is skewed to polar residues; the sequence is LSSARNTPNKIW.

This sequence belongs to the RMD9 family. Monomer. Phosphorylated. Phosphorylation promotes binding to RNA.

It is found in the mitochondrion inner membrane. Its function is as follows. May be involved in the processing or stability of mitochondrial mRNAs. This chain is RNA-binding protein RMD9-like, mitochondrial, found in Candida glabrata (strain ATCC 2001 / BCRC 20586 / JCM 3761 / NBRC 0622 / NRRL Y-65 / CBS 138) (Yeast).